Reading from the N-terminus, the 257-residue chain is Imidazole glycerol phosphate synthase subunit HisF (257 aa).

Residues Asp-11 and Asp-130 contribute to the active site.

The protein belongs to the HisA/HisF family. As to quaternary structure, heterodimer of HisH and HisF.

The protein localises to the cytoplasm. It catalyses the reaction 5-[(5-phospho-1-deoxy-D-ribulos-1-ylimino)methylamino]-1-(5-phospho-beta-D-ribosyl)imidazole-4-carboxamide + L-glutamine = D-erythro-1-(imidazol-4-yl)glycerol 3-phosphate + 5-amino-1-(5-phospho-beta-D-ribosyl)imidazole-4-carboxamide + L-glutamate + H(+). The protein operates within amino-acid biosynthesis; L-histidine biosynthesis; L-histidine from 5-phospho-alpha-D-ribose 1-diphosphate: step 5/9. IGPS catalyzes the conversion of PRFAR and glutamine to IGP, AICAR and glutamate. The HisF subunit catalyzes the cyclization activity that produces IGP and AICAR from PRFAR using the ammonia provided by the HisH subunit. The sequence is that of Imidazole glycerol phosphate synthase subunit HisF from Prochlorococcus marinus (strain SARG / CCMP1375 / SS120).